A 604-amino-acid chain; its full sequence is Crossover junction endonuclease MUS81 (604 aa).

The interval 268–290 (SSAPSDYLDPGQKSANVASSPHR) is disordered. Residues 322–419 (ELYIDHREVR…HIFYLVEETS (98 aa)) form the ERCC4 domain.

The protein belongs to the XPF family. In terms of assembly, interacts with EME1. Requires Mg(2+) as cofactor.

It localises to the nucleus. In terms of biological role, interacts with EME1 to form a DNA structure-specific endonuclease with substrate preference for branched DNA structures with a 5'-end at the branch nick. Typical substrates include 3'-flap structures, D-loops, replication forks and nicked Holliday junctions. May be required in mitosis for the processing of stalled or collapsed replication fork intermediates. May be required in meiosis for the repair of meiosis-specific double strand breaks subsequent to single-end invasion (SEI). The sequence is that of Crossover junction endonuclease MUS81 (MUS81) from Eremothecium gossypii (strain ATCC 10895 / CBS 109.51 / FGSC 9923 / NRRL Y-1056) (Yeast).